The chain runs to 193 residues: Rho-related protein racF1 (193 aa).

10 to 17 (GDGAVGKT) contacts GTP. An Effector region motif is present at residues 32-40 (YIPTVFDNY). GTP contacts are provided by residues 57 to 61 (DTAGQ) and 115 to 118 (TKQD). Cys190 is modified (cysteine methyl ester). Cys190 carries S-geranylgeranyl cysteine lipidation. The propeptide at 191-193 (TIM) is removed in mature form.

It belongs to the small GTPase superfamily. Rho family. Interacts with pakB.

The protein localises to the membrane. Its function is as follows. Might act in concert and/or share functions with other members of the RHO family in the regulation of a subset of cytoskeletal rearrangements that are required for these processes. This is Rho-related protein racF1 (racF1) from Dictyostelium discoideum (Social amoeba).